Reading from the N-terminus, the 97-residue chain is YcgL domain-containing protein Pfl01_1389 (97 aa).

Positions arginine 3–proline 87 constitute a YcgL domain.

This chain is YcgL domain-containing protein Pfl01_1389, found in Pseudomonas fluorescens (strain Pf0-1).